We begin with the raw amino-acid sequence, 584 residues long: MAAPLAQLRDRFQAALAASFGPEWAATDPLLVPATNPKFGDYQSNVAMSLAKQLGQPPRAIAETLVQNLNLADLCEPPAIAGPGFINFTLQPSYLVAQLQQLQTDERLGIQPVSPPQRVIVDFSSPNIAKEMHVGHLRSTIIGDSIARVLEFQGHEVLRLNHVGDWGTQFGMLIAFLQEQYPQALSQPDALDISDLVAFYKQAKARFDEDPSFQETARQRVVDLQSGEATARQAWQLLCDQSRREFQKIYDRLDIQLEERGESFYNPYLPAIVEDLRRLGLLVEDQGAQCVFLEGFQNKEGQPLPLIVQKSDGGYNYATTDLAALRYRLGQDQAQRIIYVTDSGQANHFAQVFQVAQRAGWLPAAAQIEHVPFGLVQGEDGKKLKTRAGDTVRLRDLLDEAVDRARTDLTTRIAAEERSETPEFIEAVAQAVGLGAVKYADLSQNRNSNYIFSFDKMLALQGNTAPYLLYAYVRIQGIARKGGIDFAQLDPVAAELTEPTERSLAKQVLQLGEVLDEVARDLLPNRLCSYLFELSQTFNQFYDRCPILNAEEPQRTSRLLLCDLTARTLKLGLSLLGISVLERM.

The 'HIGH' region motif lies at 126–136 (PNIAKEMHVGH).

It belongs to the class-I aminoacyl-tRNA synthetase family. As to quaternary structure, monomer.

Its subcellular location is the cytoplasm. It carries out the reaction tRNA(Arg) + L-arginine + ATP = L-arginyl-tRNA(Arg) + AMP + diphosphate. This chain is Arginine--tRNA ligase, found in Synechococcus sp. (strain ATCC 27144 / PCC 6301 / SAUG 1402/1) (Anacystis nidulans).